The primary structure comprises 481 residues: Putative cytochrome P450 520B1 (481 aa).

Cys427 serves as a coordination point for heme.

This sequence belongs to the cytochrome P450 family. Requires heme as cofactor.

The chain is Putative cytochrome P450 520B1 (cyp520B1) from Dictyostelium discoideum (Social amoeba).